Reading from the N-terminus, the 1941-residue chain is Diacylglycerol kinase eta (1941 aa).

The PH domain maps to 93-186 (SIIKEGYLLK…WLGSLKAATA (94 aa)). Phorbol-ester/DAG-type zinc fingers lie at residues 206 to 256 (HHHW…IANC) and 279 to 330 (PHQW…AIAC). The DAGKc domain occupies 361-497 (GNFSPLLVFV…DRWSIMVFEK (137 aa)). 4 disordered regions span residues 1030 to 1068 (TTTL…SPPR), 1132 to 1164 (CNSN…ETPT), 1215 to 1257 (LESA…PSSS), and 1276 to 1295 (RRHS…KDKD). Positions 1133–1155 (NSNNNSNNNSNSNSNNNNHNDGN) are enriched in low complexity. The region spanning 1878-1941 (WSVNEVVTWL…LQAIKDLSEN (64 aa)) is the SAM domain.

The protein belongs to the eukaryotic diacylglycerol kinase family.

Its subcellular location is the cytoplasm. It catalyses the reaction a 1,2-diacyl-sn-glycerol + ATP = a 1,2-diacyl-sn-glycero-3-phosphate + ADP + H(+). In terms of biological role, phosphorylates diacylglycerol (DAG) to generate phosphatidic acid (PA). This Drosophila grimshawi (Hawaiian fruit fly) protein is Diacylglycerol kinase eta.